The sequence spans 256 residues: Homeobox-leucine zipper protein HOX18 (256 aa).

The tract at residues 52-116 (YDHGRDEEQA…GGGGGGTRKK (65 aa)) is disordered. The segment covering 102–112 (DGGSGGGGGGG) has biased composition (gly residues). The homeobox DNA-binding region spans 112–171 (GTRKKLQLTKEQSTLLEDSFRVHNILSHAQKHELARQLKLKPRQVEVWFQNRRARTKLKQ). The interval 170–214 (KQTEVDCEFLKRCCESLTEENKQLKHELMELRRLASPAAAAAGSQ) is leucine-zipper.

It belongs to the HD-ZIP homeobox family. Class II subfamily. As to expression, expressed in roots, leaf sheaths and blades and panicles.

The protein localises to the nucleus. Functionally, probable transcription factor. The chain is Homeobox-leucine zipper protein HOX18 (HOX18) from Oryza sativa subsp. japonica (Rice).